A 576-amino-acid chain; its full sequence is SNF1-like protein kinase ssp2 (576 aa).

The Protein kinase domain maps to 34-285; sequence YIIRETLGEG…IQEIRRDPWF (252 aa). ATP contacts are provided by residues 40-48 and Lys-63; that span reads LGEGSFGKV. Asp-156 acts as the Proton acceptor in catalysis. Thr-189 bears the Phosphothreonine mark. An auto-inhibitory domain (AID) region spans residues 292 to 348; that stretch reads YLRPMEEVQGSYADSRIVSKLGEAMGFSEDYIVEALRSDENNEVKEAYNLLHENQVI. Positions 304 to 345 constitute a UBA domain; sequence ADSRIVSKLGEAMGFSEDYIVEALRSDENNEVKEAYNLLHEN. Ser-442 is subject to Phosphoserine.

It belongs to the protein kinase superfamily. CAMK Ser/Thr protein kinase family. SNF1 subfamily. As to quaternary structure, component of the AMP-activated protein kinase complex also known as the SNF1 kinase complex (Snf1c), a heterotrimeric complex composed of a catalytic subunit alpha and 2 regulatory subunits beta (amk2) and gamma (cbs2). In terms of processing, phosphorylation at Thr-189 by ssp1 is required for nuclear entry in nutritionally stressed cells.

It localises to the cytoplasm. It is found in the nucleus. The enzyme catalyses L-seryl-[protein] + ATP = O-phospho-L-seryl-[protein] + ADP + H(+). It catalyses the reaction L-threonyl-[protein] + ATP = O-phospho-L-threonyl-[protein] + ADP + H(+). Serine/threonine protein kinase essential for release from glucose repression via the phosphorylation of scr1 upon glucose deprivation. Catalytic subunit of the AMP-activated protein kinase complex also known as the SNF1 kinase complex (Snf1c), a central regulator of cellular energy homeostasis, which, in response to a fall in intracellular ATP levels, activates energy-producing pathways and inhibits energy-consuming processes. The complex phosphorylates histone H3 to form H3S10ph, which promotes H3K14ac formation, leading to transcriptional activation through TBP recruitment to the promoters. Regulates proper cell cycle exit and sexual differentiation. Also regulates ste11 levels under nitrogen deprivation. The sequence is that of SNF1-like protein kinase ssp2 from Schizosaccharomyces pombe (strain 972 / ATCC 24843) (Fission yeast).